The chain runs to 316 residues: BTB/POZ domain-containing adapter for CUL3-mediated RhoA degradation protein 2 (316 aa).

A BTB domain is found at 28-96 (KYVQLNVGGS…LRDDTVTLPQ (69 aa)). Polar residues predominate over residues 268 to 279 (EATSRSRSQASP). Positions 268–287 (EATSRSRSQASPSEDEDTFE) are disordered. Ser-278 is modified (phosphoserine). Ser-280 bears the Phosphoserine; by CK2 mark.

It belongs to the BACURD family. As to quaternary structure, component of the BCR(TNFAIP1) E3 ubiquitin ligase complex, at least composed of CUL3, TNFAIP1/BACURD2 and RBX1. Interacts with RHOA; with a preference for RhoA-GDP. Interacts with RHOB. Interacts with CSNK2B. Interacts with PCNA. Post-translationally, phosphorylation at Ser-280 by CK2 facilitates the nucleus localization and increases interaction with PCNA.

The protein resides in the cytoplasm. It localises to the nucleus. Its subcellular location is the endosome. The protein operates within protein modification; protein ubiquitination. Its function is as follows. Substrate-specific adapter of a BCR (BTB-CUL3-RBX1) E3 ubiquitin-protein ligase complex involved in regulation of cytoskeleton structure. The BCR(TNFAIP1) E3 ubiquitin ligase complex mediates the ubiquitination of RHOA, leading to its degradation by the proteasome, thereby regulating the actin cytoskeleton and cell migration. Its interaction with RHOB may regulate apoptosis. May enhance the PCNA-dependent DNA polymerase delta activity. This chain is BTB/POZ domain-containing adapter for CUL3-mediated RhoA degradation protein 2 (Tnfaip1), found in Rattus norvegicus (Rat).